We begin with the raw amino-acid sequence, 825 residues long: Osmosensitive cation channel TMEM63C (825 aa).

The Extracellular segment spans residues 1–50; that stretch reads MAFESWPAGGVRPVEELDVRSFLMEENSTAERCYRSHSRSSVLQGLPFGG. The chain crosses the membrane as a helical span at residues 51–75; sequence VPTVLAINVVLWLILLLIFSCLRKA. Residues 76-141 lie on the Cytoplasmic side of the membrane; the sequence is AWDYGRLALL…KDEEIRSKCG (66 aa). Residues 98–117 form a disordered region; it reads EQSEKEKTPSDSSPSDSETK. A helical transmembrane segment spans residues 142–174; it reads IDAVTYLSFQRHIILLMMVVCLLSLTIILPVNL. The Extracellular segment spans residues 175–198; the sequence is SGNLLGDNPENFGRTTVVNVPAQN. The helical transmembrane segment at 199–223 threads the bilayer; sequence IFLWLHSIFALLYFVITVLCMAHHS. The Cytoplasmic portion of the chain corresponds to 224–418; the sequence is SRLEYREDEK…IIWENLSVCG (195 aa). A helical transmembrane segment spans residues 419-448; that stretch reads PRWWLRCILLNILLFLLLFFLTTPAIIVNT. Topologically, residues 449–463 are extracellular; sequence MDKFNVTRPVESLRN. The helical transmembrane segment at 464–493 threads the bilayer; sequence PVITQFFPTLLLWAFSILLPFIVYYSSFFE. Residues 494 to 497 lie on the Cytoplasmic side of the membrane; that stretch reads YHWT. Residues 498-534 form a helical membrane-spanning segment; it reads RSGENQVTMHKCFLLLVFMVIILPSLGLSSLNLFFRW. Topologically, residues 535-557 are extracellular; sequence LFDVRFLDETDVKFQCVFLPDNG. The helical transmembrane segment at 558 to 590 threads the bilayer; it reads AFFVNYVITSSLIGTAMELLRIPALLVYSLRLC. The Cytoplasmic segment spans residues 591–610; the sequence is FAKSKAECIHVKISQAYEFQ. A helical transmembrane segment spans residues 611-629; that stretch reads FGLEYAWTMCIFSVSMTYS. Residues 630-632 lie on the Extracellular side of the membrane; sequence ITC. A helical membrane pass occupies residues 633–657; the sequence is PVIVPFGLLYLVLKHMVDRYNIYYA. The Cytoplasmic segment spans residues 658–664; sequence YTPTKLN. Residues 665-693 traverse the membrane as a helical segment; sequence QRIHAAAISQVVVAPILCMFWLLFFSVLR. Residues 694–698 are Extracellular-facing; the sequence is LGPVQ. A helical membrane pass occupies residues 699-719; the sequence is PITLFTFITLLCSIAFSCFGF. Residues 720–825 are Cytoplasmic-facing; it reads CMKKLRADRS…LLMDSPVAFQ (106 aa). The interval 777–825 is disordered; that stretch reads SPAHQSYGTMVNSQSSVRDAEEDEEKDLEETLETELKDDLLMDSPVAFQ. Residues 779-793 show a composition bias toward polar residues; sequence AHQSYGTMVNSQSSV. The span at 796–809 shows a compositional bias: acidic residues; sequence AEEDEEKDLEETLE.

The protein belongs to the CSC1 (TC 1.A.17) family. Monomer.

It is found in the endoplasmic reticulum membrane. The protein resides in the cell membrane. It carries out the reaction Ca(2+)(in) = Ca(2+)(out). Acts as an osmosensitive cation channel preferentially activated upon hypotonic stress. In contrast to tmem63b, does not show phospholipid scramblase activity. Required for the functional integrity of the kidney glomerular filtration barrier. In Danio rerio (Zebrafish), this protein is Osmosensitive cation channel TMEM63C (tmem63c).